The chain runs to 146 residues: Bifunctional adenosine 5'-phosphosulfate phosphorylase/adenylylsulfatase HINT4 (146 aa).

The HIT domain maps to 9–120; sequence IFCEIVRNPT…YVPRWKAIKY (112 aa). Residues 101 to 105 carry the Histidine triad motif motif; the sequence is HLHLH. Catalysis depends on His105, which acts as the Tele-AMP-histidine intermediate.

As to quaternary structure, homodimer.

It is found in the peroxisome. The catalysed reaction is sulfate + ADP + H(+) = adenosine 5'-phosphosulfate + phosphate. It catalyses the reaction adenosine 5'-phosphosulfate + H2O = sulfate + AMP + 2 H(+). Its activity is regulated as follows. The adenosine 5'-phosphosulfate phosphorylase activity is enhanced at low pH. In terms of biological role, possesses adenylylsulfatase activity in vitro, releasing AMP and sulfate from adenylyl sulfate. Also possesses adenosine 5'-phosphosulfate (APS) phosphorylase activity in vitro. Catalyzes the phosphorolysis of APS, leading to ADP and sulfate. The polypeptide is Bifunctional adenosine 5'-phosphosulfate phosphorylase/adenylylsulfatase HINT4 (Arabidopsis thaliana (Mouse-ear cress)).